Consider the following 379-residue polypeptide: Alanine racemase (379 aa).

Lysine 35 acts as the Proton acceptor; specific for D-alanine in catalysis. Lysine 35 carries the post-translational modification N6-(pyridoxal phosphate)lysine. A substrate-binding site is contributed by arginine 133. The active-site Proton acceptor; specific for L-alanine is the tyrosine 265. Substrate is bound at residue methionine 312.

Belongs to the alanine racemase family. Pyridoxal 5'-phosphate is required as a cofactor.

It carries out the reaction L-alanine = D-alanine. It functions in the pathway amino-acid biosynthesis; D-alanine biosynthesis; D-alanine from L-alanine: step 1/1. In terms of biological role, catalyzes the interconversion of L-alanine and D-alanine. May also act on other amino acids. In Treponema denticola (strain ATCC 35405 / DSM 14222 / CIP 103919 / JCM 8153 / KCTC 15104), this protein is Alanine racemase (alr).